Consider the following 201-residue polypeptide: Glycerol-3-phosphate acyltransferase (201 aa).

The next 5 membrane-spanning stretches (helical) occupy residues 3–23 (LFAI…SAIL), 53–73 (WVAL…VWLG), 80–100 (HFEL…PIFF), 115–135 (IAPI…LIFF), and 153–175 (FYVW…LLIY).

It belongs to the PlsY family. In terms of assembly, probably interacts with PlsX.

The protein localises to the cell inner membrane. It catalyses the reaction an acyl phosphate + sn-glycerol 3-phosphate = a 1-acyl-sn-glycero-3-phosphate + phosphate. Its pathway is lipid metabolism; phospholipid metabolism. Catalyzes the transfer of an acyl group from acyl-phosphate (acyl-PO(4)) to glycerol-3-phosphate (G3P) to form lysophosphatidic acid (LPA). This enzyme utilizes acyl-phosphate as fatty acyl donor, but not acyl-CoA or acyl-ACP. The polypeptide is Glycerol-3-phosphate acyltransferase (Pasteurella multocida (strain Pm70)).